Consider the following 1270-residue polypeptide: DNA-directed RNA polymerase subunit beta (1270 aa).

Belongs to the RNA polymerase beta chain family. The RNAP catalytic core consists of 2 alpha, 1 beta, 1 beta' and 1 omega subunit. When a sigma factor is associated with the core the holoenzyme is formed, which can initiate transcription.

The catalysed reaction is RNA(n) + a ribonucleoside 5'-triphosphate = RNA(n+1) + diphosphate. Its function is as follows. DNA-dependent RNA polymerase catalyzes the transcription of DNA into RNA using the four ribonucleoside triphosphates as substrates. The chain is DNA-directed RNA polymerase subunit beta from Porphyromonas cangingivalis.